Reading from the N-terminus, the 378-residue chain is DNA replication and repair protein RecF (378 aa).

31-38 (GENGSGKT) provides a ligand contact to ATP.

The protein belongs to the RecF family.

Its subcellular location is the cytoplasm. In terms of biological role, the RecF protein is involved in DNA metabolism; it is required for DNA replication and normal SOS inducibility. RecF binds preferentially to single-stranded, linear DNA. It also seems to bind ATP. This chain is DNA replication and repair protein RecF, found in Teredinibacter turnerae (strain ATCC 39867 / T7901).